We begin with the raw amino-acid sequence, 433 residues long: Histidine--tRNA ligase (433 aa).

This sequence belongs to the class-II aminoacyl-tRNA synthetase family. Homodimer.

Its subcellular location is the cytoplasm. The catalysed reaction is tRNA(His) + L-histidine + ATP = L-histidyl-tRNA(His) + AMP + diphosphate + H(+). This chain is Histidine--tRNA ligase, found in Crocosphaera subtropica (strain ATCC 51142 / BH68) (Cyanothece sp. (strain ATCC 51142)).